Reading from the N-terminus, the 307-residue chain is Protein FAM76A (307 aa).

2 disordered regions span residues 161 to 181 (SRLS…SSIQ) and 287 to 307 (KQAA…ITSP). Residues 217–297 (IIAQLKEEVA…QAAALSKGKK (81 aa)) are a coiled coil.

The protein belongs to the FAM76 family.

The chain is Protein FAM76A (FAM76A) from Gallus gallus (Chicken).